The following is a 272-amino-acid chain: 5'-nucleotidase SurE (272 aa).

The a divalent metal cation site is built by D28, D29, S59, and N115.

Belongs to the SurE nucleotidase family. A divalent metal cation is required as a cofactor.

Its subcellular location is the cytoplasm. It catalyses the reaction a ribonucleoside 5'-phosphate + H2O = a ribonucleoside + phosphate. In terms of biological role, nucleotidase that shows phosphatase activity on nucleoside 5'-monophosphates. The protein is 5'-nucleotidase SurE of Chlorobium chlorochromatii (strain CaD3).